We begin with the raw amino-acid sequence, 966 residues long: C4 phosphoenolpyruvate carboxylase (966 aa).

Ser-11 is subject to Phosphoserine. His-172 is a catalytic residue. D-glucose 6-phosphate-binding residues include Trp-283, Arg-450, and Asp-597. Lys-600 is an active-site residue. A D-glucose 6-phosphate-binding site is contributed by Arg-635. Residue Arg-641 is part of the active site. Residue Arg-641 participates in L-aspartate binding. Position 665 (Thr-665) interacts with D-glucose 6-phosphate. Gln-673 provides a ligand contact to L-aspartate. D-glucose 6-phosphate-binding positions include Arg-753 and 767–769; that span reads RAI. L-aspartate-binding residues include Lys-829, Arg-888, and Asn-964.

Belongs to the PEPCase type 1 family. As to quaternary structure, homotetramer. Requires Mg(2+) as cofactor. In terms of tissue distribution, expressed in mesophyll cells, but not in bundle-sheath, roots, stems and flowers.

It localises to the cytoplasm. The catalysed reaction is oxaloacetate + phosphate = phosphoenolpyruvate + hydrogencarbonate. The protein operates within photosynthesis; C4 acid pathway. 5 fold activation by the allosteric regulator glucose-6-phosphate. Low sensitivity to inhibition by L-malate and L-aspartate. Up-regulated by light-reversible phosphorylation. In terms of biological role, forms oxaloacetate through the carboxylation of phosphoenolpyruvate (PEP). Catalyzes the first step of C4 photosynthesis. This is C4 phosphoenolpyruvate carboxylase from Flaveria trinervia (Clustered yellowtops).